We begin with the raw amino-acid sequence, 155 residues long: MKLQLVAVGTKMPDWVQTGFTEYLRRFPKDMPFELIEIPAGKRGKNADIKRILDKEGEQMLAAAGKNRIVTLDIPGKPWDTPQLAAELERWKLDGRDVSLLIGGPEGLSPACKAAAEQSWSLSALTLPHPLVRVLVAESLYRAWSITTNHPYHRE.

Residues leucine 72, glycine 103, and 122 to 127 contribute to the S-adenosyl-L-methionine site; that span reads LSALTL.

The protein belongs to the RNA methyltransferase RlmH family. As to quaternary structure, homodimer.

The protein resides in the cytoplasm. The enzyme catalyses pseudouridine(1915) in 23S rRNA + S-adenosyl-L-methionine = N(3)-methylpseudouridine(1915) in 23S rRNA + S-adenosyl-L-homocysteine + H(+). Its function is as follows. Specifically methylates the pseudouridine at position 1915 (m3Psi1915) in 23S rRNA. The protein is Ribosomal RNA large subunit methyltransferase H of Shigella boydii serotype 18 (strain CDC 3083-94 / BS512).